The chain runs to 288 residues: Bifunctional protein FolD (288 aa).

NADP(+) is bound by residues glycine 165–serine 167, serine 190, and isoleucine 231.

This sequence belongs to the tetrahydrofolate dehydrogenase/cyclohydrolase family. Homodimer.

The enzyme catalyses (6R)-5,10-methylene-5,6,7,8-tetrahydrofolate + NADP(+) = (6R)-5,10-methenyltetrahydrofolate + NADPH. It catalyses the reaction (6R)-5,10-methenyltetrahydrofolate + H2O = (6R)-10-formyltetrahydrofolate + H(+). Its pathway is one-carbon metabolism; tetrahydrofolate interconversion. Functionally, catalyzes the oxidation of 5,10-methylenetetrahydrofolate to 5,10-methenyltetrahydrofolate and then the hydrolysis of 5,10-methenyltetrahydrofolate to 10-formyltetrahydrofolate. This chain is Bifunctional protein FolD, found in Nitrosospira multiformis (strain ATCC 25196 / NCIMB 11849 / C 71).